We begin with the raw amino-acid sequence, 319 residues long: Cytochrome c biogenesis protein CcsA (319 aa).

A run of 7 helical transmembrane segments spans residues 9-29 (ILTH…LITL), 44-64 (GVIG…AYSG), 71-91 (LYES…FPYL), 143-163 (MVLG…LLVI), 225-245 (IISL…VWAN), 259-273 (TWAF…IYLH), and 286-306 (AIVA…VNLL).

The protein belongs to the CcmF/CycK/Ccl1/NrfE/CcsA family. In terms of assembly, may interact with Ccs1.

The protein resides in the plastid. The protein localises to the chloroplast thylakoid membrane. Functionally, required during biogenesis of c-type cytochromes (cytochrome c6 and cytochrome f) at the step of heme attachment. The chain is Cytochrome c biogenesis protein CcsA from Oenothera parviflora (Small-flowered evening primrose).